The sequence spans 158 residues: uncharacterized protein (158 aa).

The N-terminal stretch at 1–30 (MNKKFLKCGTLFLISCSILGSTIPAVTVFS) is a signal peptide.

This is an uncharacterized protein from Streptococcus pneumoniae serotype 2 (strain D39 / NCTC 7466).